The chain runs to 499 residues: Protein-tyrosine sulfotransferase (499 aa).

Over 1–9 (MRLPYRNKK) the chain is Cytoplasmic. The helical; Signal-anchor for type II membrane protein transmembrane segment at 10–30 (VTLWVLFGIIVITMFLFKFTE) threads the bilayer. Topologically, residues 31–499 (LRPTCLFKVD…NIMEDPMADT (469 aa)) are lumenal. 80–84 (RSGTT) serves as a coordination point for 3'-phosphoadenylyl sulfate. Cys98 and Cys158 are joined by a disulfide. Glu101 acts as the Proton donor/acceptor in catalysis. The tract at residues 103-107 (RVIPR) is interaction with peptide substrate. 3 residues coordinate 3'-phosphoadenylyl sulfate: Arg185, Ser193, and Arg197. A disulfide bridge links Cys227 with Cys235. 3'-phosphoadenylyl sulfate is bound by residues Tyr240, 287 to 296 (SSDQVIKPVN), and Lys302. N-linked (GlcNAc...) asparagine glycans are attached at residues Asn346 and Asn380. Disordered stretches follow at residues 362–460 (KQVL…QKPK) and 476–499 (NNINNNINNNNNNNNIMEDPMADT). 2 stretches are compositionally biased toward low complexity: residues 375–400 (TNTIINNSNNKDNNNNQYTINKIIPE) and 408–434 (HVQQQHLQQQQQQHLQQQQHQRQQQQQ). Over residues 443-460 (EREAEPDREQQLLHQKPK) the composition is skewed to basic and acidic residues. Low complexity predominate over residues 476-491 (NNINNNINNNNNNNNI).

It belongs to the protein sulfotransferase family.

Its subcellular location is the golgi apparatus membrane. The enzyme catalyses L-tyrosyl-[protein] + 3'-phosphoadenylyl sulfate = O-sulfo-L-tyrosine-[protein] + adenosine 3',5'-bisphosphate + H(+). Catalyzes the O-sulfation of tyrosine residues within acidic motifs of polypeptides. Has a role in protein secretion. In Drosophila melanogaster (Fruit fly), this protein is Protein-tyrosine sulfotransferase.